The sequence spans 826 residues: Leucine--tRNA ligase (826 aa).

A 'HIGH' region motif is present at residues 42–52 (PYPSGNLHMGH). Positions 581–585 (KMSKS) match the 'KMSKS' region motif. Residue Lys-584 coordinates ATP.

Belongs to the class-I aminoacyl-tRNA synthetase family.

It localises to the cytoplasm. The enzyme catalyses tRNA(Leu) + L-leucine + ATP = L-leucyl-tRNA(Leu) + AMP + diphosphate. This chain is Leucine--tRNA ligase, found in Desulforudis audaxviator (strain MP104C).